Reading from the N-terminus, the 556-residue chain is Small ribosomal subunit protein bS1 (556 aa).

6 S1 motif domains span residues 35-105 (TIKE…ISQQ), 120-183 (NAII…ISRK), 204-272 (TEPV…LSIK), 289-359 (GYAI…VSLK), 377-444 (DVLE…LSAK), and 461-525 (DSVI…ASVH).

The protein belongs to the bacterial ribosomal protein bS1 family.

Functionally, binds mRNA; thus facilitating recognition of the initiation point. It is needed to translate mRNA with a short Shine-Dalgarno (SD) purine-rich sequence. In Helicobacter pylori (strain ATCC 700392 / 26695) (Campylobacter pylori), this protein is Small ribosomal subunit protein bS1 (rpsA).